We begin with the raw amino-acid sequence, 513 residues long: Pleiotropic regulator 1 (513 aa).

At Met1 the chain carries N-acetylmethionine. Residues Ser119 and Ser200 each carry the phosphoserine modification. WD repeat units lie at residues 201 to 240, 243 to 282, 285 to 324, 327 to 366, 369 to 409, 410 to 448, and 459 to 498; these read GHLGWVRCIAVEPGNQWFVTGSADRTIKIWDLASGKLKLS, GHISTVRGVIVSTRSPYLFSCGEDKQVKCWDLEYNKVIRH, GHLSAVYGLDLHPTIDVLVTCSRDSTARIWDVRTKASVHT, GHTNAVATVRCQAAEPQIITGSHDTTIRLWDLVAGKTRVT, NHKK…QNLS, GHNAIINTLTVNSDGVLVSGADNGTMHLWDWRTGYNFQR, and DSESGIFACAFDQSESRLLTAEADKTIKVYKEDDTATEET. Position 390 is a phosphoserine (Ser390).

The protein belongs to the WD repeat PRL1/PRL2 family. In terms of assembly, identified in the spliceosome C complex. Component of the PRP19-CDC5L splicing complex composed of a core complex comprising a homotetramer of PRPF19, CDC5L, PLRG1 and BCAS2, and at least three less stably associated proteins CTNNBL1, CWC15 and HSPA8. Interacts (via its WD40 repeat domain) directly with CDC5L (via its C-terminal); the interaction is required for mRNA splicing but not for spliceosome assembly. Component of the minor spliceosome, which splices U12-type introns. Within this complex, interacts with CRIPT. Also interacts directly in the complex with BCAS2 and PRPF19. Interacts with USB1.

It is found in the nucleus. The protein localises to the nucleus speckle. In terms of biological role, involved in pre-mRNA splicing as component of the spliceosome. Component of the PRP19-CDC5L complex that forms an integral part of the spliceosome and is required for activating pre-mRNA splicing. As a component of the minor spliceosome, involved in the splicing of U12-type introns in pre-mRNAs. This chain is Pleiotropic regulator 1 (PLRG1), found in Bos taurus (Bovine).